A 697-amino-acid chain; its full sequence is PHD finger protein At1g33420 (697 aa).

The PHD-type zinc finger occupies 603–653 (KVDCKCGTKDDDGERMLACDGCGVWHHTRCIGINNADALPSKFLCFRCIEL).

Its subcellular location is the nucleus. This is PHD finger protein At1g33420 from Arabidopsis thaliana (Mouse-ear cress).